The sequence spans 283 residues: NADPH-dependent 3-dehydrocapnine reductase (283 aa).

The Proton acceptor role is filled by Tyr153.

It belongs to the short-chain dehydrogenases/reductases (SDR) family.

It carries out the reaction 3-oxocapnine + NADPH + H(+) = capnine + NADP(+). The protein operates within lipid metabolism. Its function is as follows. Reductase involved in the biosynthesis of capnine, a sulfonolipid present in the outer membrane of gliding Bacteroidetes and essential for gliding motility. Catalyzes the reduction of 3-dehydrocapnine to capnine. The sequence is that of NADPH-dependent 3-dehydrocapnine reductase from Ornithobacterium rhinotracheale.